The sequence spans 187 residues: Accessory gene regulator protein B (187 aa).

Helical transmembrane passes span 49–69 (ISIFLSVFLYTLVTHLSYMLI), 82–102 (ILCYIQSILIFVFVPYFLINI), 106–126 (FTYLLALSIIGLISVVIYAPA), 144–164 (VSIIMYLLVMILSLIIHPFYA), and 166–186 (FMLLGILVESITLLPIFFPKE).

Belongs to the AgrB family.

It is found in the cell membrane. Functionally, essential for the production of a quorum sensing system signal molecule, the autoinducing peptide (AIP). This quorum sensing system is responsible for the regulation of the expression of virulence factor genes. Involved in the proteolytic processing of AgrD, the precursor of AIP. The polypeptide is Accessory gene regulator protein B (Staphylococcus aureus (strain bovine RF122 / ET3-1)).